The following is a 608-amino-acid chain: ATM1-type heavy metal exporter (608 aa).

Residues 1 to 38 lie on the Cytoplasmic side of the membrane; the sequence is MPPETATNPKDARHDGWQTLKRFLPYLWPADNAVLRRR. The helical transmembrane segment at 39–60 threads the bilayer; the sequence is VVGAILMVLLGKATTLALPFAY. Positions 39-327 constitute an ABC transmembrane type-1 domain; the sequence is VVGAILMVLL…LGMVYRTIRQ (289 aa). The Periplasmic portion of the chain corresponds to 61–82; it reads KKAVDAMTLGGGAQPALTVALA. The chain crosses the membrane as a helical span at residues 83-105; the sequence is FVLAYALGRFSGVLFDNLRNIVF. The Cytoplasmic portion of the chain corresponds to 106-154; the sequence is ERVGQDATRHLAENVFARLHKLSLRFHLARRTGEVTKVIERGTKSIDTM. A helical membrane pass occupies residues 155–178; sequence LYFLLFNIAPTVIELTAVIVIFWL. Asn-179 is a topological domain (periplasmic). The chain crosses the membrane as a helical span at residues 180 to 202; it reads FGLGLVTATILAVIAYVWTTRTI. Residues 203-266 lie on the Cytoplasmic side of the membrane; the sequence is TEWRTHLREK…AAVKSENSLG (64 aa). Residues 206–210 and 269–272 each bind glutathione; these read RTHLR and NIAQ. The chain crosses the membrane as a helical span at residues 267-285; it reads LLNIAQALIVNLLMAGAMA. At 286–300 the chain is on the periplasmic side; sequence WTVYGWSQGKLTVGD. Residues 301–322 traverse the membrane as a helical segment; sequence LVFVNTYLTQLFRPLDMLGMVY. Residue 316–319 participates in glutathione binding; that stretch reads DMLG. The Cytoplasmic segment spans residues 323–608; that stretch reads RTIRQGLIDM…ESAEVSEAAE (286 aa). An ABC transporter domain is found at 361–595; sequence VTFDNVVFGY…DGLYAEMWAR (235 aa). ATP contacts are provided by residues Tyr-370 and 394 to 405; that span reads GPSGAGKSTIAR.

It belongs to the ABC transporter superfamily. ABCB family. Heavy Metal importer (TC 3.A.1.210) subfamily. As to quaternary structure, homodimer.

It localises to the cell inner membrane. Functionally, mediates the ATP-dependent export of glutathione-conjugated substrates, such as heavy metal-glutathione conjugates. ATP hydrolysis is stimulated by glutathione binding. Protects cells against toxic heavy metal ions, such as silver and mercury ions. May also mediate the transport of glutathione-conjugated aromatic hydrocarbons, such as dinitrobenzene. This chain is ATM1-type heavy metal exporter (atm1), found in Novosphingobium aromaticivorans (strain ATCC 700278 / DSM 12444 / CCUG 56034 / CIP 105152 / NBRC 16084 / F199).